The primary structure comprises 534 residues: CTP synthase (534 aa).

An amidoligase domain region spans residues 1 to 266; sequence MKTKFIFVTG…DEQVVEKLNI (266 aa). Ser-14 is a CTP binding site. UTP is bound at residue Ser-14. ATP is bound by residues 15-20 and Asp-72; that span reads SIGKGL. Mg(2+) is bound by residues Asp-72 and Glu-140. CTP-binding positions include 147-149, 187-192, and Lys-223; these read DIE and KTKPTQ. Residues 187 to 192 and Lys-223 each bind UTP; that span reads KTKPTQ. A Glutamine amidotransferase type-1 domain is found at 292-534; the sequence is RIAIVGKYVN…IAAALHNIKA (243 aa). Gly-354 provides a ligand contact to L-glutamine. Cys-381 serves as the catalytic Nucleophile; for glutamine hydrolysis. L-glutamine is bound by residues 382-385, Glu-405, and Arg-462; that span reads LGMQ. Active-site residues include His-507 and Glu-509.

The protein belongs to the CTP synthase family. In terms of assembly, homotetramer.

It carries out the reaction UTP + L-glutamine + ATP + H2O = CTP + L-glutamate + ADP + phosphate + 2 H(+). The catalysed reaction is L-glutamine + H2O = L-glutamate + NH4(+). The enzyme catalyses UTP + NH4(+) + ATP = CTP + ADP + phosphate + 2 H(+). It participates in pyrimidine metabolism; CTP biosynthesis via de novo pathway; CTP from UDP: step 2/2. Allosterically activated by GTP, when glutamine is the substrate; GTP has no effect on the reaction when ammonia is the substrate. The allosteric effector GTP functions by stabilizing the protein conformation that binds the tetrahedral intermediate(s) formed during glutamine hydrolysis. Inhibited by the product CTP, via allosteric rather than competitive inhibition. Its function is as follows. Catalyzes the ATP-dependent amination of UTP to CTP with either L-glutamine or ammonia as the source of nitrogen. Regulates intracellular CTP levels through interactions with the four ribonucleotide triphosphates. This is CTP synthase from Geotalea uraniireducens (strain Rf4) (Geobacter uraniireducens).